The primary structure comprises 312 residues: tRNA uridine(34) hydroxylase (312 aa).

A Rhodanese domain is found at 124–218 (SDPEVLLIDT…YLEEVPQEQT (95 aa)). The Cysteine persulfide intermediate role is filled by C178. Composition is skewed to basic and acidic residues over residues 279–294 (TRES…ELAR) and 302–312 (IGRDPRQLNEA). The segment at 279–312 (TRESARERQKQIELARARNQPHPIGRDPRQLNEA) is disordered.

The protein belongs to the TrhO family.

It carries out the reaction uridine(34) in tRNA + AH2 + O2 = 5-hydroxyuridine(34) in tRNA + A + H2O. Its function is as follows. Catalyzes oxygen-dependent 5-hydroxyuridine (ho5U) modification at position 34 in tRNAs. The chain is tRNA uridine(34) hydroxylase from Ectopseudomonas mendocina (strain ymp) (Pseudomonas mendocina).